The primary structure comprises 212 residues: Placenta-specific protein 1 (212 aa).

The first 22 residues, Met-1–Gly-22, serve as a signal peptide directing secretion.

It belongs to the PLAC1 family. In terms of tissue distribution, expressed in placenta. Localizes primarily to differentiated syncytiotrophoblast throughout gestation as well as to a small population of villous cytotrophoblasts. Also detected in maternal blood and rapidly disappears following delivery, but is not detected in other adult or fetal tissues examined.

The protein resides in the secreted. Functionally, may play a role in placental development. In Homo sapiens (Human), this protein is Placenta-specific protein 1.